A 166-amino-acid polypeptide reads, in one-letter code: Crossover junction endodeoxyribonuclease RuvC (166 aa).

Catalysis depends on residues Asp7, Glu67, and Asp140. Asp7, Glu67, and Asp140 together coordinate Mg(2+).

The protein belongs to the RuvC family. Homodimer which binds Holliday junction (HJ) DNA. The HJ becomes 2-fold symmetrical on binding to RuvC with unstacked arms; it has a different conformation from HJ DNA in complex with RuvA. In the full resolvosome a probable DNA-RuvA(4)-RuvB(12)-RuvC(2) complex forms which resolves the HJ. It depends on Mg(2+) as a cofactor.

It is found in the cytoplasm. The catalysed reaction is Endonucleolytic cleavage at a junction such as a reciprocal single-stranded crossover between two homologous DNA duplexes (Holliday junction).. The RuvA-RuvB-RuvC complex processes Holliday junction (HJ) DNA during genetic recombination and DNA repair. Endonuclease that resolves HJ intermediates. Cleaves cruciform DNA by making single-stranded nicks across the HJ at symmetrical positions within the homologous arms, yielding a 5'-phosphate and a 3'-hydroxyl group; requires a central core of homology in the junction. The consensus cleavage sequence is 5'-(A/T)TT(C/G)-3'. Cleavage occurs on the 3'-side of the TT dinucleotide at the point of strand exchange. HJ branch migration catalyzed by RuvA-RuvB allows RuvC to scan DNA until it finds its consensus sequence, where it cleaves and resolves the cruciform DNA. This is Crossover junction endodeoxyribonuclease RuvC from Brevibacillus brevis (strain 47 / JCM 6285 / NBRC 100599).